The following is a 377-amino-acid chain: MLISARRLRRCQFLQLLASCFVLSLMALLVQEDNSLISHVKSYSYRYLINSYDFVNVSLSIPRDRLDGAASYRYLLNNRHICLNEDVLLLLFVKTAPENRRRRDAIRNTWGNEDFIRSQYDANIKVVFALGAEGDPVKSREIQQDLVNENKRFKDLIQQDFSDTFHNLTLKLLLQFGWVNSFCPSAKFIMSADDDIFVHTPNLVSYLKSLPIETQDFWIGRVHRGSPPIRRKTSKYYVPYEMYPWSSYPDYTAGAAYVVSRDVAAKVYEASQTLNTSLYIDDVFMGICANKMGLVPQYHVFFSGEGKSPYHPCIYNKMMTSHGHLDDLDYLWRQAIDPNVKSISSGFWGNLYCRFVNIMLLCRISYVDTYPCSAAWS.

Over 1-12 (MLISARRLRRCQ) the chain is Cytoplasmic. Residues 13-30 (FLQLLASCFVLSLMALLV) traverse the membrane as a helical; Signal-anchor for type II membrane protein segment. Residues 31 to 377 (QEDNSLISHV…DTYPCSAAWS (347 aa)) are Lumenal-facing. N-linked (GlcNAc...) asparagine glycosylation is found at N56, N167, and N275.

Belongs to the glycosyltransferase 31 family.

The protein resides in the golgi apparatus membrane. The catalysed reaction is a beta-D-Gal-(1-&gt;4)-beta-D-Glc-(1&lt;-&gt;1)-Cer(d18:1(4E)) + UDP-N-acetyl-alpha-D-glucosamine = a beta-D-GlcNAc-(1-&gt;3)-beta-D-Gal-(1-&gt;4)-beta-D-Glc-(1&lt;-&gt;1)-Cer(d18:1(4E)) + UDP + H(+). It carries out the reaction a neolactoside nLc4Cer(d18:1(4E)) + UDP-N-acetyl-alpha-D-glucosamine = a neolactoside IV(3)-beta-GlcNAc-nLc4Cer(d18:1(4E)) + UDP + H(+). Its pathway is protein modification; protein glycosylation. Functionally, beta-1,3-N-acetylglucosaminyltransferase that plays a key role in the synthesis of lacto- or neolacto-series carbohydrate chains on glycolipids. In Xenopus laevis (African clawed frog), this protein is Lactosylceramide 1,3-N-acetyl-beta-D-glucosaminyltransferase A (b3gnt5-a).